Reading from the N-terminus, the 1072-residue chain is Carbamoyl phosphate synthase large chain (1072 aa).

Residues 1 to 401 (MPKYKDISKV…SLLKAVRSLE (401 aa)) form a carboxyphosphate synthetic domain region. Residues Arg129, Arg169, Gly175, Gly176, Lys208, Leu210, Glu215, Gly241, Val242, His243, Gln284, and Glu298 each coordinate ATP. The ATP-grasp 1 domain maps to 133–327 (KRKMQEIGEP…IAKIAAKIAI (195 aa)). Residues Gln284, Glu298, and Asn300 each coordinate Mg(2+). Mn(2+) contacts are provided by Gln284, Glu298, and Asn300. Positions 402 to 544 (IKAYGLRLDS…YIYSTYCEED (143 aa)) are oligomerization domain. The tract at residues 545 to 929 (EVETHDIPKV…ALYKALEGAG (385 aa)) is carbamoyl phosphate synthetic domain. Residues 671–861 (SKLLKELNIN…MVKLAVEVAL (191 aa)) enclose the ATP-grasp 2 domain. Arg707, Lys746, Ile748, Glu752, Gly777, Val778, His779, Ser780, Gln820, and Glu832 together coordinate ATP. Residues Gln820, Glu832, and Asn834 each contribute to the Mg(2+) site. 3 residues coordinate Mn(2+): Gln820, Glu832, and Asn834. The MGS-like domain occupies 930 to 1072 (LKIPKKGKIL…QKDNVKNLVL (143 aa)). The tract at residues 930 to 1072 (LKIPKKGKIL…QKDNVKNLVL (143 aa)) is allosteric domain.

Belongs to the CarB family. Composed of two chains; the small (or glutamine) chain promotes the hydrolysis of glutamine to ammonia, which is used by the large (or ammonia) chain to synthesize carbamoyl phosphate. Tetramer of heterodimers (alpha,beta)4. Requires Mg(2+) as cofactor. The cofactor is Mn(2+).

The catalysed reaction is hydrogencarbonate + L-glutamine + 2 ATP + H2O = carbamoyl phosphate + L-glutamate + 2 ADP + phosphate + 2 H(+). It catalyses the reaction hydrogencarbonate + NH4(+) + 2 ATP = carbamoyl phosphate + 2 ADP + phosphate + 2 H(+). It participates in amino-acid biosynthesis; L-arginine biosynthesis; carbamoyl phosphate from bicarbonate: step 1/1. The protein operates within pyrimidine metabolism; UMP biosynthesis via de novo pathway; (S)-dihydroorotate from bicarbonate: step 1/3. In terms of biological role, large subunit of the glutamine-dependent carbamoyl phosphate synthetase (CPSase). CPSase catalyzes the formation of carbamoyl phosphate from the ammonia moiety of glutamine, carbonate, and phosphate donated by ATP, constituting the first step of 2 biosynthetic pathways, one leading to arginine and/or urea and the other to pyrimidine nucleotides. The large subunit (synthetase) binds the substrates ammonia (free or transferred from glutamine from the small subunit), hydrogencarbonate and ATP and carries out an ATP-coupled ligase reaction, activating hydrogencarbonate by forming carboxy phosphate which reacts with ammonia to form carbamoyl phosphate. The chain is Carbamoyl phosphate synthase large chain from Caldanaerobacter subterraneus subsp. tengcongensis (strain DSM 15242 / JCM 11007 / NBRC 100824 / MB4) (Thermoanaerobacter tengcongensis).